Reading from the N-terminus, the 232-residue chain is Endonuclease NucS (232 aa).

This sequence belongs to the NucS endonuclease family.

Its subcellular location is the cytoplasm. Its function is as follows. Cleaves both 3' and 5' ssDNA extremities of branched DNA structures. The chain is Endonuclease NucS from Mycobacteroides abscessus (strain ATCC 19977 / DSM 44196 / CCUG 20993 / CIP 104536 / JCM 13569 / NCTC 13031 / TMC 1543 / L948) (Mycobacterium abscessus).